The primary structure comprises 476 residues: Protein transport protein Sec61 subunit alpha-like 1 (476 aa).

Topologically, residues 2–33 (AIKFLEVIKPFCAVLPEIQKPERKIQFREKVL) are cytoplasmic. A helical membrane pass occupies residues 34–53 (WTAITLFIFLVCCQIPLFGI). Topologically, residues 54–76 (MSSDSADPFYWMRVILASNRGTL) are lumenal. Residues 77–96 (MELGISPIVTSGLIMQLLAG) traverse the membrane as a helical segment. At 97-117 (AKIIEVGDTPKDRALFNGAQK) the chain is on the cytoplasmic side. The chain crosses the membrane as a helical span at residues 118-138 (LFGMIITIGQAIVYVMTGMYG). Over 139-144 (DPSEMG) the chain is Lumenal. A helical membrane pass occupies residues 145-165 (AGICLLIIIQLFVAGLIVLLL). The Cytoplasmic portion of the chain corresponds to 166–172 (DELLQKG). Residues 173 to 193 (YGLGSGISLFIATNICETIVW) form a helical membrane-spanning segment. The Lumenal portion of the chain corresponds to 194–240 (KAFSPTTVNTGRGTEFEGAIIALFHLLATRTDKVRALREAFYRQNLP). Residues 241–261 (NLMNLIATVFVFAVVIYFQGF) form a helical membrane-spanning segment. Over 262–288 (RVDLPIKSARYRGQYNTYPIKLFYTSN) the chain is Cytoplasmic. The chain crosses the membrane as a helical span at residues 289-309 (IPIILQSALVSNLYVISQMLS). The Lumenal segment spans residues 310–354 (TRFSGNFLVNLLGTWSDTSSGGPARAYPVGGLCYYLSPPESFGSV). The chain crosses the membrane as a helical span at residues 355-375 (LDDPVHAVIYIVFMLGSCAFF). Topologically, residues 376–420 (SKTWIEVSGSSAKDVAKQLKEQQMVMRGHRETSMVHELNRYIPTA) are cytoplasmic. The chain crosses the membrane as a helical span at residues 421–441 (AAFGGLCIGGLSVMADFLGAI). Over 442–445 (GSGT) the chain is Lumenal. Residues 446–462 (GILLAVTIIYQYFEIFV) form a helical membrane-spanning segment. At 463–476 (KEQSEVGSMGALLF) the chain is on the cytoplasmic side.

Belongs to the SecY/SEC61-alpha family. In terms of assembly, the SEC61 channel-forming translocon complex consists of channel-forming core components SEC61A1, SEC61B and SEC61G and different auxiliary components such as SEC62 and SEC63. The SEC61 channel associates with the multi-pass translocon (MPT) complex.

It is found in the endoplasmic reticulum membrane. Its function is as follows. Component of SEC61 channel-forming translocon complex that mediates transport of signal peptide-containing precursor polypeptides across the endoplasmic reticulum (ER). Forms a ribosome receptor and a gated pore in the ER membrane, both functions required for cotranslational translocation of nascent polypeptides. May cooperate with auxiliary protein SEC62, SEC63 and HSPA5/BiP to enable post-translational transport of small presecretory proteins. The SEC61 channel is also involved in ER membrane insertion of transmembrane proteins: it mediates membrane insertion of the first few transmembrane segments of proteins, while insertion of subsequent transmembrane regions of multi-pass membrane proteins is mediated by the multi-pass translocon (MPT) complex. Plays a role in the pronephric kidney tubule development. The polypeptide is Protein transport protein Sec61 subunit alpha-like 1 (sec61al1) (Danio rerio (Zebrafish)).